A 481-amino-acid chain; its full sequence is Glycogen synthase (481 aa).

Lysine 15 contacts ADP-alpha-D-glucose.

This sequence belongs to the glycosyltransferase 1 family. Bacterial/plant glycogen synthase subfamily.

It catalyses the reaction [(1-&gt;4)-alpha-D-glucosyl](n) + ADP-alpha-D-glucose = [(1-&gt;4)-alpha-D-glucosyl](n+1) + ADP + H(+). The protein operates within glycan biosynthesis; glycogen biosynthesis. Its function is as follows. Synthesizes alpha-1,4-glucan chains using ADP-glucose. The sequence is that of Glycogen synthase from Mesorhizobium japonicum (strain LMG 29417 / CECT 9101 / MAFF 303099) (Mesorhizobium loti (strain MAFF 303099)).